The primary structure comprises 258 residues: Thiamine thiazole synthase (258 aa).

NAD(+) is bound by residues Ala36, 55 to 56, Gly63, Val127, and 154 to 156; these read EK and HVD. Positions 156 and 171 each coordinate Fe cation. Residue Met224 coordinates NAD(+). Arg234 is a glycine binding site.

It belongs to the THI4 family. In terms of assembly, homooctamer; tetramer of dimers. It depends on Fe(2+) as a cofactor.

The catalysed reaction is hydrogen sulfide + glycine + NAD(+) = ADP-5-ethyl-4-methylthiazole-2-carboxylate + nicotinamide + 3 H2O + H(+). It participates in cofactor biosynthesis; thiamine diphosphate biosynthesis. Involved in the biosynthesis of the thiazole moiety of thiamine. Catalyzes the conversion of NAD and glycine to adenosine diphosphate 5-(2-hydroxyethyl)-4-methylthiazole-2-carboxylate (ADT), an adenylated thiazole intermediate, using free sulfide as a source of sulfur. The polypeptide is Thiamine thiazole synthase (Methanococcoides burtonii (strain DSM 6242 / NBRC 107633 / OCM 468 / ACE-M)).